Here is a 174-residue protein sequence, read N- to C-terminus: Protein RESTRICTED TEV MOVEMENT 1 (174 aa).

One can recognise a Jacalin-type lectin domain in the interval 1-152 (MKIGPVGKHD…LQYIGVYLRP (152 aa)).

This sequence belongs to the jacalin lectin family. As to quaternary structure, self-interacts. Interacts with RTM3. Expressed at low levels exclusively in phloem-associated cells (e.g. sieve elements and adjacent cells).

It is found in the cytoplasm. Its function is as follows. Required for the restriction of long-distance movement of the pathogenic tobacco etch virus (TEV) without causing a hypersensitive response or inducing systemic acquired resistance. This is Protein RESTRICTED TEV MOVEMENT 1 (RTM1) from Arabidopsis thaliana (Mouse-ear cress).